The sequence spans 351 residues: UDP-N-acetylenolpyruvoylglucosamine reductase (351 aa).

One can recognise an FAD-binding PCMH-type domain in the interval 11-213 (GVGGSIACFI…KQVRDQVLRI (203 aa)). Arg158 is a catalytic residue. Residue Ser239 is the Proton donor of the active site. Glu343 is an active-site residue.

Belongs to the MurB family. FAD is required as a cofactor.

It is found in the cytoplasm. The enzyme catalyses UDP-N-acetyl-alpha-D-muramate + NADP(+) = UDP-N-acetyl-3-O-(1-carboxyvinyl)-alpha-D-glucosamine + NADPH + H(+). It functions in the pathway cell wall biogenesis; peptidoglycan biosynthesis. Its function is as follows. Cell wall formation. In Tropheryma whipplei (strain Twist) (Whipple's bacillus), this protein is UDP-N-acetylenolpyruvoylglucosamine reductase.